Reading from the N-terminus, the 208-residue chain is Small ribosomal subunit protein uS4 (208 aa).

The S4 RNA-binding domain occupies 98–158 (CRLDTVSYRM…EKAKNHLRIK (61 aa)).

The protein belongs to the universal ribosomal protein uS4 family. In terms of assembly, part of the 30S ribosomal subunit. Contacts protein S5. The interaction surface between S4 and S5 is involved in control of translational fidelity.

One of the primary rRNA binding proteins, it binds directly to 16S rRNA where it nucleates assembly of the body of the 30S subunit. Functionally, with S5 and S12 plays an important role in translational accuracy. The chain is Small ribosomal subunit protein uS4 from Nitrosospira multiformis (strain ATCC 25196 / NCIMB 11849 / C 71).